Consider the following 217-residue polypeptide: Somatotropin (217 aa).

Positions 1 to 24 (MAAGSWTSLLLAFTLLCLPQLREA) are cleaved as a signal peptide. Zn(2+) is bound at residue H44. C79 and C191 are oxidised to a cystine. S132 is modified (phosphoserine). E200 is a Zn(2+) binding site. C208 and C215 are oxidised to a cystine.

The protein belongs to the somatotropin/prolactin family.

The protein resides in the secreted. Plays an important role in growth control. Its major role in stimulating body growth is to stimulate the liver and other tissues to secrete IGF1. It stimulates both the differentiation and proliferation of myoblasts. It also stimulates amino acid uptake and protein synthesis in muscle and other tissues. The protein is Somatotropin (GH1) of Callithrix jacchus (White-tufted-ear marmoset).